We begin with the raw amino-acid sequence, 398 residues long: Homeobox protein knotted-1-like 1 (398 aa).

Disordered stretches follow at residues 20 to 61, 78 to 102, and 241 to 273; these read SPIS…HHHQ, NCFR…ASSS, and LNNP…EIDP. Residues 23-56 are compositionally biased toward low complexity; sequence SSSNKNDNTSDTNNNNNNNNSSNYGPGYNNTNNN. The span at 87–102 shows a compositional bias: polar residues; that stretch reads PNNNNNPSVKSEASSS. Positions 279-299 constitute an ELK domain; it reads ELKNHLLKKYSGYLSSLKQEL. Positions 300–363 form a DNA-binding region, homeobox; TALE-type; sequence SKKKKKGKLP…NQRKRHWKPS (64 aa).

It belongs to the TALE/KNOX homeobox family. May form heterodimeric complex with the TALE/BELL proteins BEL1, BLH2, BLH8/PNF and BLH9/PNY. Interacts with OFP1, OFP2, OFP4, OFP6 and OFP12. Interacts with CCT7 and CCT8. Interacts with KNATM-B. Binds to AGO10/PNH. Interacts with BZIP30. In terms of tissue distribution, expressed in the vegetative meristem. Present in the base of flower primordia.

It is found in the nucleus. In terms of biological role, may play a role in meristem function, and may be involved in maintaining cells in an undifferentiated, meristematic state, and its expression disappears at the same time the shoot apex undergoes the transition from vegetative to reproductive development. Positive regulator of LATERAL ORGAN BOUNDARIES (LOB). Probably binds to the DNA sequence 5'-TGAC-3'. Able to traffic from the L1 to the L2/L3 layers of the meristem, presumably through plasmodesmata. In Arabidopsis thaliana (Mouse-ear cress), this protein is Homeobox protein knotted-1-like 1 (KNAT1).